Reading from the N-terminus, the 440-residue chain is Peroxisome proliferator-activated receptor delta (440 aa).

The tract at residues 1–53 (MEQPQEETPEAREEEKEEVAMGDGAPELNGGPEHTLPSSSCADLSQNSSPSSL) is disordered. Over residues 36–53 (LPSSSCADLSQNSSPSSL) the composition is skewed to polar residues. A DNA-binding region (nuclear receptor) is located at residues 70 to 144 (NMECRVCGDK…LGMSHNAIRF (75 aa)). 2 NR C4-type zinc fingers span residues 73–93 (CRVC…CEGC) and 110–132 (CDRI…FQKC). Positions 210–438 (FVIHDIETLW…HPLLQEIYKD (229 aa)) constitute an NR LBD domain.

This sequence belongs to the nuclear hormone receptor family. NR1 subfamily. In terms of assembly, heterodimer with the retinoid X receptor. Interacts (via domain NR LBD) with CRY1 and CRY2 in a ligand-dependent manner. In terms of processing, 'Lys-48'-linked polyubiquitinated; leading to proteasomal degradation. Deubiquitinated and stabilized by OTUD3. As to expression, heart, adrenal and intestine.

The protein resides in the nucleus. Functionally, ligand-activated transcription factor key mediator of energy metabolism in adipose tissues. Receptor that binds peroxisome proliferators such as hypolipidemic drugs and fatty acids. Has a preference for poly-unsaturated fatty acids, such as gamma-linoleic acid and eicosapentanoic acid. Once activated by a ligand, the receptor binds to promoter elements of target genes. Regulates the peroxisomal beta-oxidation pathway of fatty acids. Functions as transcription activator for the acyl-CoA oxidase gene. Decreases expression of NPC1L1 once activated by a ligand. The protein is Peroxisome proliferator-activated receptor delta (Ppard) of Mus musculus (Mouse).